The following is a 213-amino-acid chain: MDISVKQMYNIEENGHAMGFLKKFMMENAGAAAARLLDERLEGAPRVLAFAGMGNNGGDALVAARHLAGRGADVTVVLLGNPDGIRTEEARWNWSILEKMPSIKLVSGGSFDASVSPDAIIDGILGTGITGEIREPYLSAIKFINGIQCTKMAIDAPSGLDPQTGEAADPCVKVDFTVTFHRMKEGIPKRKDLTGDVTVQKIGIPPEAEKGVL.

The 203-residue stretch at 8 to 210 (MYNIEENGHA…KIGIPPEAEK (203 aa)) folds into the YjeF N-terminal domain. 55-59 (NNGGD) provides a ligand contact to (6S)-NADPHX. The K(+) site is built by Asn-56 and Asp-122. (6S)-NADPHX-binding positions include 126–132 (GTGITGE), Tyr-137, and Asp-155. Ser-158 contacts K(+).

Belongs to the NnrE/AIBP family. K(+) is required as a cofactor.

The enzyme catalyses (6R)-NADHX = (6S)-NADHX. It carries out the reaction (6R)-NADPHX = (6S)-NADPHX. Its function is as follows. Catalyzes the epimerization of the S- and R-forms of NAD(P)HX, a damaged form of NAD(P)H that is a result of enzymatic or heat-dependent hydration. This is a prerequisite for the S-specific NAD(P)H-hydrate dehydratase to allow the repair of both epimers of NAD(P)HX. In Cenarchaeum symbiosum (strain A), this protein is NAD(P)H-hydrate epimerase.